A 287-amino-acid polypeptide reads, in one-letter code: Elongation factor Ts (287 aa).

The segment at 80 to 83 is involved in Mg(2+) ion dislocation from EF-Tu; the sequence is TDFL.

The protein belongs to the EF-Ts family.

The protein resides in the cytoplasm. Associates with the EF-Tu.GDP complex and induces the exchange of GDP to GTP. It remains bound to the aminoacyl-tRNA.EF-Tu.GTP complex up to the GTP hydrolysis stage on the ribosome. In Pseudomonas putida (strain GB-1), this protein is Elongation factor Ts.